A 315-amino-acid polypeptide reads, in one-letter code: Transaldolase (315 aa).

The active-site Schiff-base intermediate with substrate is the Lys125.

This sequence belongs to the transaldolase family. Type 1 subfamily. As to quaternary structure, homodimer.

The protein localises to the cytoplasm. The enzyme catalyses D-sedoheptulose 7-phosphate + D-glyceraldehyde 3-phosphate = D-erythrose 4-phosphate + beta-D-fructose 6-phosphate. The protein operates within carbohydrate degradation; pentose phosphate pathway; D-glyceraldehyde 3-phosphate and beta-D-fructose 6-phosphate from D-ribose 5-phosphate and D-xylulose 5-phosphate (non-oxidative stage): step 2/3. Transaldolase is important for the balance of metabolites in the pentose-phosphate pathway. The sequence is that of Transaldolase from Polaromonas sp. (strain JS666 / ATCC BAA-500).